Here is a 473-residue protein sequence, read N- to C-terminus: MKHKIRHIHFVGIGGSGMGGIAEVLINLGFQISGSDMHSNSTTRRLQCLGAVIHHTHAAENIQSADAVVISTAIHSDNPEVIAARERRIPVVPRAMMLAELLRLRRGIAIAGTHGKTTTTSLVASILAEAGQDPTFVIGGKLKTVDSHARLGKGEFIVVEADESDASFLYLQPVLTVVTNIDADHMSTYEHDFNRLKQTFVEFIEHLPFYGMAVLCVDDPHVREIISMITRPVTTYGIASEDAQICATNIRHDRCRMHFLAHIGVNGSPRTLEVTLNLPGKHNVLNALAAIAVGNELGVPDEAIVKALATFGGVDRRFQQYGEIPLPDQGSFALIDDYGHHPAEIAATMAAARNAFPGRRLVLAFQPHRYSRTRDLFEDFVRVLSGADVLLLTEVYPAGEEPIIAADSKSLARAIRVQGKIEPIYIEQIDELKATIHTIAQDGDVILIMGAGSIGKSAPDLAEPAMKLTLITG.

Gly112–Thr118 provides a ligand contact to ATP.

This sequence belongs to the MurCDEF family.

The protein resides in the cytoplasm. It catalyses the reaction UDP-N-acetyl-alpha-D-muramate + L-alanine + ATP = UDP-N-acetyl-alpha-D-muramoyl-L-alanine + ADP + phosphate + H(+). Its pathway is cell wall biogenesis; peptidoglycan biosynthesis. In terms of biological role, cell wall formation. In Nitrosomonas europaea (strain ATCC 19718 / CIP 103999 / KCTC 2705 / NBRC 14298), this protein is UDP-N-acetylmuramate--L-alanine ligase.